The following is a 701-amino-acid chain: Glycine--tRNA ligase beta subunit (701 aa).

The protein belongs to the class-II aminoacyl-tRNA synthetase family. In terms of assembly, tetramer of two alpha and two beta subunits.

The protein resides in the cytoplasm. The enzyme catalyses tRNA(Gly) + glycine + ATP = glycyl-tRNA(Gly) + AMP + diphosphate. The protein is Glycine--tRNA ligase beta subunit of Thiobacillus denitrificans (strain ATCC 25259 / T1).